Here is a 370-residue protein sequence, read N- to C-terminus: Chloromuconate cycloisomerase (370 aa).

The Proton acceptor role is filled by lysine 165. Mn(2+) is bound by residues aspartate 194, glutamate 220, and aspartate 245. The Proton donor role is filled by glutamate 323.

Belongs to the mandelate racemase/muconate lactonizing enzyme family. Requires Mn(2+) as cofactor.

It catalyses the reaction 2-[(2R)-2-chloro-2,5-dihydro-5-oxofuryl]acetate = 3-chloro-cis,cis-muconate + H(+). It functions in the pathway aromatic compound metabolism; 3-chlorocatechol degradation. This Pseudomonas sp. (strain P51) protein is Chloromuconate cycloisomerase (tcbD).